Consider the following 281-residue polypeptide: Plasmanylethanolamine desaturase (281 aa).

Topologically, residues 1-28 (MKTQEIEKKVRQQDAQVLAQGYSPAIRA) are cytoplasmic. A helical transmembrane segment spans residues 29–45 (MEIAAIVSFVSLEVALV). Residues 46-58 (YRLWGTPYAGTWL) lie on the Periplasmic side of the membrane. Residues 59-75 (LLSAVLLGYLAADFVSG) form a helical membrane-spanning segment. At 76-123 (FVHWMGDTWGSTEMPVLGKALIRPFREHHVDEKAITRHDFVETNGNNC) the chain is on the cytoplasmic side. A helical transmembrane segment spans residues 124-138 (LISLPVAIIALCLPM). The Periplasmic portion of the chain corresponds to 139–142 (SGPG). Residues 143 to 159 (WVFCASFLGAMIFWVMA) traverse the membrane as a helical segment. Residues 160 to 281 (TNQFHKWSHM…VQEKPASTRP (122 aa)) lie on the Cytoplasmic side of the membrane. The short motif at 164 to 168 (HKWSH) is the Histidine box-1 element. Positions 191–195 (HRIHH) match the Histidine box-2 motif.

It belongs to the fatty acid desaturase CarF family. In terms of assembly, interacts with CarR.

The protein resides in the cell inner membrane. It carries out the reaction a 1-(1,2-saturated alkyl)-2-acyl-sn-glycero-3-phosphoethanolamine + 2 Fe(II)-[cytochrome b5] + O2 + 2 H(+) = a 1-O-(1Z-alkenyl)-2-acyl-sn-glycero-3-phosphoethanolamine + 2 Fe(III)-[cytochrome b5] + 2 H2O. The catalysed reaction is 1-O-(13-methyltetradecyl)-2-(13-methyltetradecanoyl)-sn-glycero-3-phosphoethanolamine + 2 Fe(II)-[cytochrome b5] + O2 + 2 H(+) = 1-O-(1Z-13-methyltetradecenyl)-2-(13-methyltetradecanoyl)-sn-glycero-3-phosphoethanolamine + 2 Fe(III)-[cytochrome b5] + 2 H2O. Plasmanylethanolamine desaturase involved in plasmalogen biogenesis in the membrane, required for light-induced carotenogenesis. Plasmalogens are glycerophospholipids with a hydrocarbon chain linked by a vinyl ether bond at the glycerol sn-1 position, and are involved in antioxidative and signaling mechanisms, most precisely in sensing photooxidative stress through singlet oxygen. Participates in the light-dependent inactivation of the antisigma factor CarR. Mediates signaling by singlet oxygen, generated via photoexcited protoporphyrin IX. This chain is Plasmanylethanolamine desaturase, found in Myxococcus xanthus.